The sequence spans 319 residues: Olfactory receptor 2S2 (319 aa).

At Met-1–Lys-26 the chain is on the extracellular side. N-linked (GlcNAc...) asparagine glycosylation occurs at Asn-5. Residues Thr-27–Thr-50 traverse the membrane as a helical segment. The Cytoplasmic portion of the chain corresponds to Ile-51–Thr-58. A helical transmembrane segment spans residues Pro-59 to Pro-80. The Extracellular portion of the chain corresponds to Leu-81 to Gln-101. Cys-98 and Cys-190 are oxidised to a cystine. Residues Met-102–Phe-121 traverse the membrane as a helical segment. Residues Asp-122 to Ala-140 are Cytoplasmic-facing. A helical transmembrane segment spans residues Ala-141–Val-159. Topologically, residues His-160 to Asn-196 are extracellular. Residues Val-197–Val-220 form a helical membrane-spanning segment. Topologically, residues Phe-221–Lys-237 are cytoplasmic. A helical membrane pass occupies residues Val-238–Tyr-260. Residues Gly-261–Lys-279 lie on the Extracellular side of the membrane. A helical transmembrane segment spans residues Leu-280 to Leu-299. Residues Arg-300–Gln-319 lie on the Cytoplasmic side of the membrane.

This sequence belongs to the G-protein coupled receptor 1 family.

Its subcellular location is the cell membrane. In terms of biological role, odorant receptor. The polypeptide is Olfactory receptor 2S2 (OR2S2) (Homo sapiens (Human)).